Reading from the N-terminus, the 100-residue chain is NAD(P)H-quinone oxidoreductase subunit 4L, chloroplastic (100 aa).

Transmembrane regions (helical) follow at residues 1–21 (MLEHALILGAYLFSIGIYGLV), 31–51 (MCLELILNAVNLNLVTFSNFF), and 63–83 (IFVIAIAAAEAAIGLAIVLAI).

It belongs to the complex I subunit 4L family. In terms of assembly, NDH is composed of at least 16 different subunits, 5 of which are encoded in the nucleus.

The protein localises to the plastid. The protein resides in the chloroplast thylakoid membrane. The enzyme catalyses a plastoquinone + NADH + (n+1) H(+)(in) = a plastoquinol + NAD(+) + n H(+)(out). The catalysed reaction is a plastoquinone + NADPH + (n+1) H(+)(in) = a plastoquinol + NADP(+) + n H(+)(out). NDH shuttles electrons from NAD(P)H:plastoquinone, via FMN and iron-sulfur (Fe-S) centers, to quinones in the photosynthetic chain and possibly in a chloroplast respiratory chain. The immediate electron acceptor for the enzyme in this species is believed to be plastoquinone. Couples the redox reaction to proton translocation, and thus conserves the redox energy in a proton gradient. The polypeptide is NAD(P)H-quinone oxidoreductase subunit 4L, chloroplastic (Cryptomeria japonica (Japanese cedar)).